Reading from the N-terminus, the 631-residue chain is tRNA uridine 5-carboxymethylaminomethyl modification enzyme MnmG (631 aa).

Residues 15–20, Val127, and Ser182 contribute to the FAD site; that span reads GGGHAG. 275-289 lines the NAD(+) pocket; the sequence is GPRYCPSIEDKIVRF. Gln372 lines the FAD pocket.

This sequence belongs to the MnmG family. In terms of assembly, homodimer. Heterotetramer of two MnmE and two MnmG subunits. It depends on FAD as a cofactor.

Its subcellular location is the cytoplasm. NAD-binding protein involved in the addition of a carboxymethylaminomethyl (cmnm) group at the wobble position (U34) of certain tRNAs, forming tRNA-cmnm(5)s(2)U34. The sequence is that of tRNA uridine 5-carboxymethylaminomethyl modification enzyme MnmG from Buchnera aphidicola subsp. Schizaphis graminum (strain Sg).